A 532-amino-acid polypeptide reads, in one-letter code: Probable NAD kinase 1 (532 aa).

Residues 1–26 (MSLDELPHKVSDERVNHDTVTSHESE) are compositionally biased toward basic and acidic residues. The interval 1-32 (MSLDELPHKVSDERVNHDTVTSHESEIGSGSI) is disordered.

It belongs to the NAD kinase family.

It catalyses the reaction NAD(+) + ATP = ADP + NADP(+) + H(+). The chain is Probable NAD kinase 1 from Oryza sativa subsp. japonica (Rice).